The sequence spans 310 residues: Thioredoxin reductase (310 aa).

34 to 41 (NGMQPGGQ) lines the FAD pocket. A disulfide bond links Cys-135 and Cys-138. 281–290 (DVQDKIYRQA) contributes to the FAD binding site.

Belongs to the class-II pyridine nucleotide-disulfide oxidoreductase family. As to quaternary structure, homodimer. FAD is required as a cofactor.

It is found in the cytoplasm. It catalyses the reaction [thioredoxin]-dithiol + NADP(+) = [thioredoxin]-disulfide + NADPH + H(+). In Rickettsia typhi (strain ATCC VR-144 / Wilmington), this protein is Thioredoxin reductase (trxB).